We begin with the raw amino-acid sequence, 213 residues long: Probable thymidylate kinase 2 (213 aa).

10–17 provides a ligand contact to ATP; sequence GIDGSGKS.

The protein belongs to the thymidylate kinase family.

The enzyme catalyses dTMP + ATP = dTDP + ADP. In Saccharolobus solfataricus (strain ATCC 35092 / DSM 1617 / JCM 11322 / P2) (Sulfolobus solfataricus), this protein is Probable thymidylate kinase 2 (tmk2).